Here is a 206-residue protein sequence, read N- to C-terminus: Ribosomal RNA large subunit methyltransferase E (206 aa).

S-adenosyl-L-methionine-binding residues include G61, W63, D81, D97, and D122. The active-site Proton acceptor is the K162.

This sequence belongs to the class I-like SAM-binding methyltransferase superfamily. RNA methyltransferase RlmE family.

It is found in the cytoplasm. It catalyses the reaction uridine(2552) in 23S rRNA + S-adenosyl-L-methionine = 2'-O-methyluridine(2552) in 23S rRNA + S-adenosyl-L-homocysteine + H(+). Specifically methylates the uridine in position 2552 of 23S rRNA at the 2'-O position of the ribose in the fully assembled 50S ribosomal subunit. The sequence is that of Ribosomal RNA large subunit methyltransferase E from Neisseria gonorrhoeae (strain ATCC 700825 / FA 1090).